The following is a 382-amino-acid chain: Quinolinate synthase (382 aa).

The iminosuccinate site is built by His63 and Ser84. Cys129 is a binding site for [4Fe-4S] cluster. Iminosuccinate-binding positions include 155 to 157 (YAN) and Ser172. Position 216 (Cys216) interacts with [4Fe-4S] cluster. Iminosuccinate is bound by residues 242–244 (HPE) and Thr259. Cys313 contacts [4Fe-4S] cluster.

It belongs to the quinolinate synthase family. Type 1 subfamily. It depends on [4Fe-4S] cluster as a cofactor.

The protein localises to the cytoplasm. It carries out the reaction iminosuccinate + dihydroxyacetone phosphate = quinolinate + phosphate + 2 H2O + H(+). Its pathway is cofactor biosynthesis; NAD(+) biosynthesis; quinolinate from iminoaspartate: step 1/1. Its function is as follows. Catalyzes the condensation of iminoaspartate with dihydroxyacetone phosphate to form quinolinate. This chain is Quinolinate synthase, found in Ralstonia pickettii (strain 12J).